The chain runs to 252 residues: DNA-directed RNA polymerase III subunit rpc8 (252 aa).

The disordered stretch occupies residues 214–252; that stretch reads WTNQSAGDDDENEEDGGENQDDEVAEDDGGEEPTIEEDE. A compositionally biased stretch (acidic residues) spans 220 to 252; the sequence is GDDDENEEDGGENQDDEVAEDDGGEEPTIEEDE.

Belongs to the eukaryotic RPB7/RPC8 RNA polymerase subunit family. Component of the RNA polymerase III (Pol III) complex consisting of several subunits.

Its subcellular location is the nucleus. Functionally, DNA-dependent RNA polymerase catalyzes the transcription of DNA into RNA using the four ribonucleoside triphosphates as substrates. In Dictyostelium discoideum (Social amoeba), this protein is DNA-directed RNA polymerase III subunit rpc8 (polr3h-1).